The chain runs to 150 residues: Arginine repressor (150 aa).

This sequence belongs to the ArgR family.

Its subcellular location is the cytoplasm. It participates in amino-acid biosynthesis; L-arginine biosynthesis [regulation]. Functionally, regulates arginine biosynthesis genes. The chain is Arginine repressor from Clostridium acetobutylicum (strain ATCC 824 / DSM 792 / JCM 1419 / IAM 19013 / LMG 5710 / NBRC 13948 / NRRL B-527 / VKM B-1787 / 2291 / W).